The chain runs to 219 residues: Lipoprotein-releasing system ATP-binding protein LolD (219 aa).

Residues 3 to 219 form the ABC transporter domain; it reads IEARNIRKSF…HMRDGLLFSE (217 aa). An ATP-binding site is contributed by 35–42; it reads GTSGAGKT.

It belongs to the ABC transporter superfamily. Lipoprotein translocase (TC 3.A.1.125) family. As to quaternary structure, the complex is composed of two ATP-binding proteins (LolD) and two transmembrane proteins (LolC and LolE).

It is found in the cell inner membrane. In terms of biological role, part of the ABC transporter complex LolCDE involved in the translocation of mature outer membrane-directed lipoproteins, from the inner membrane to the periplasmic chaperone, LolA. Responsible for the formation of the LolA-lipoprotein complex in an ATP-dependent manner. The polypeptide is Lipoprotein-releasing system ATP-binding protein LolD (Porphyromonas gingivalis (strain ATCC BAA-308 / W83)).